Reading from the N-terminus, the 180-residue chain is Large ribosomal subunit protein uL5 (180 aa).

It belongs to the universal ribosomal protein uL5 family. Part of the 50S ribosomal subunit; part of the 5S rRNA/L5/L18/L25 subcomplex. Contacts the 5S rRNA and the P site tRNA. Forms a bridge to the 30S subunit in the 70S ribosome.

Its function is as follows. This is one of the proteins that bind and probably mediate the attachment of the 5S RNA into the large ribosomal subunit, where it forms part of the central protuberance. In the 70S ribosome it contacts protein S13 of the 30S subunit (bridge B1b), connecting the 2 subunits; this bridge is implicated in subunit movement. Contacts the P site tRNA; the 5S rRNA and some of its associated proteins might help stabilize positioning of ribosome-bound tRNAs. The protein is Large ribosomal subunit protein uL5 of Clostridium botulinum (strain Loch Maree / Type A3).